The primary structure comprises 507 residues: ATP synthase subunit alpha, chloroplastic (507 aa).

Residue 170 to 177 (GDRQTGKT) participates in ATP binding. Residue T257 is modified to Phosphothreonine.

The protein belongs to the ATPase alpha/beta chains family. F-type ATPases have 2 components, CF(1) - the catalytic core - and CF(0) - the membrane proton channel. CF(1) has five subunits: alpha(3), beta(3), gamma(1), delta(1), epsilon(1). CF(0) has four main subunits: a, b, b' and c.

Its subcellular location is the plastid. It localises to the chloroplast thylakoid membrane. The catalysed reaction is ATP + H2O + 4 H(+)(in) = ADP + phosphate + 5 H(+)(out). Functionally, produces ATP from ADP in the presence of a proton gradient across the membrane. The alpha chain is a regulatory subunit. The polypeptide is ATP synthase subunit alpha, chloroplastic (Barbarea verna (Land cress)).